The primary structure comprises 94 residues: Co-chaperonin GroES (94 aa).

The protein belongs to the GroES chaperonin family. Heptamer of 7 subunits arranged in a ring. Interacts with the chaperonin GroEL.

It localises to the cytoplasm. Together with the chaperonin GroEL, plays an essential role in assisting protein folding. The GroEL-GroES system forms a nano-cage that allows encapsulation of the non-native substrate proteins and provides a physical environment optimized to promote and accelerate protein folding. GroES binds to the apical surface of the GroEL ring, thereby capping the opening of the GroEL channel. The chain is Co-chaperonin GroES from Clostridium botulinum.